Reading from the N-terminus, the 634-residue chain is MINITLPDGSRREFESPVSVMQVAQSIGAGLAKATIAGQVDGQLVDASDVIDHDASLRIITAKDAEGVEIIRHSCAHLVGHAVKQLYPEVKMVIGPVIAEGFYYDIYSERPFTPDDMAAIEQRMQELIAQDYDVIKKVTPRAEVIEVFAQRGEEYKLRLIEDMSEDITAMGLYYHQEYVDMCRGPHVPNTRFLKAFKLTRISGAYWRGDAKNEQLQRIYGTAWADKKQLDAYILRMEEADKRDHRRIGKAQDLFHLQEEAPGLVFWHPKGWSLWQVVEQYMRKVYRDSGYGEVRCPQILDVSLWQKSGHWDNYQDAMFFTESEKRTYAVKPMNCPGHVQVFNQGLHSYRDLPIRYGEFGACHRNEPSGALHGILRVRGFTQDDGHVFCLESQIESEVTAFHQQALAVYTAFGFDDIQIKIALRPEKRLGDDATWDKAEAALRSALGVCGVEWQELPGEGAFYGPKIEYHLKDAIGRTWQLGTMQVDFMMPGRLGAEYVDENSQKKHPVMLHRAIVGSMERFIGILIEHHAGAFPSWLAPVQVVVANITDAQAEYVDSVRKTLANQGFRVSADLRNEKIGYKIREHTLQRVPYLLVVGDREKENGAVAVRTRSGEDLGTMTVSAFIERLQAEQAA.

The TGS domain occupies 1–61; that stretch reads MINITLPDGS…DHDASLRIIT (61 aa). The interval 243–534 is catalytic; sequence DHRRIGKAQD…LIEHHAGAFP (292 aa). Zn(2+) is bound by residues C334, H385, and H511.

This sequence belongs to the class-II aminoacyl-tRNA synthetase family. In terms of assembly, homodimer. Zn(2+) is required as a cofactor.

The protein localises to the cytoplasm. It carries out the reaction tRNA(Thr) + L-threonine + ATP = L-threonyl-tRNA(Thr) + AMP + diphosphate + H(+). Catalyzes the attachment of threonine to tRNA(Thr) in a two-step reaction: L-threonine is first activated by ATP to form Thr-AMP and then transferred to the acceptor end of tRNA(Thr). Also edits incorrectly charged L-seryl-tRNA(Thr). This Xanthomonas euvesicatoria pv. vesicatoria (strain 85-10) (Xanthomonas campestris pv. vesicatoria) protein is Threonine--tRNA ligase.